Here is a 366-residue protein sequence, read N- to C-terminus: Chorismate synthase (366 aa).

NADP(+) contacts are provided by R48 and R54. Residues 125 to 127, 238 to 239, G278, 293 to 297, and R319 each bind FMN; these read RSS, NA, and KPTSS.

This sequence belongs to the chorismate synthase family. As to quaternary structure, homotetramer. Requires FMNH2 as cofactor.

It catalyses the reaction 5-O-(1-carboxyvinyl)-3-phosphoshikimate = chorismate + phosphate. It functions in the pathway metabolic intermediate biosynthesis; chorismate biosynthesis; chorismate from D-erythrose 4-phosphate and phosphoenolpyruvate: step 7/7. Functionally, catalyzes the anti-1,4-elimination of the C-3 phosphate and the C-6 proR hydrogen from 5-enolpyruvylshikimate-3-phosphate (EPSP) to yield chorismate, which is the branch point compound that serves as the starting substrate for the three terminal pathways of aromatic amino acid biosynthesis. This reaction introduces a second double bond into the aromatic ring system. The sequence is that of Chorismate synthase from Neisseria meningitidis serogroup B (strain ATCC BAA-335 / MC58).